The chain runs to 295 residues: Ethanolamine ammonia-lyase small subunit (295 aa).

Val-207, Glu-228, and Cys-258 together coordinate adenosylcob(III)alamin.

This sequence belongs to the EutC family. In terms of assembly, the basic unit is a heterodimer which dimerizes to form tetramers. The heterotetramers trimerize; 6 large subunits form a core ring with 6 small subunits projecting outwards. Adenosylcob(III)alamin serves as cofactor.

It localises to the bacterial microcompartment. The catalysed reaction is ethanolamine = acetaldehyde + NH4(+). Its pathway is amine and polyamine degradation; ethanolamine degradation. Catalyzes the deamination of various vicinal amino-alcohols to oxo compounds. Allows this organism to utilize ethanolamine as the sole source of nitrogen and carbon in the presence of external vitamin B12. In Escherichia coli (strain SMS-3-5 / SECEC), this protein is Ethanolamine ammonia-lyase small subunit.